We begin with the raw amino-acid sequence, 697 residues long: Alpha-1,4-glucan:maltose-1-phosphate maltosyltransferase (697 aa).

Lys-284 contacts alpha-maltose 1-phosphate. The segment at 286–305 (RNNSVTAAPGDVGSPWAIGS) is disordered. Residues Gln-344 and Asp-379 each contribute to the alpha-maltose 1-phosphate site. Asp-414 serves as the catalytic Nucleophile. Asn-415 is an alpha-maltose 1-phosphate binding site. The active-site Proton donor is Glu-443. An alpha-maltose 1-phosphate-binding site is contributed by 553–554 (KY).

Belongs to the glycosyl hydrolase 13 family. GlgE subfamily. As to quaternary structure, homodimer.

It catalyses the reaction alpha-maltose 1-phosphate + [(1-&gt;4)-alpha-D-glucosyl](n) = [(1-&gt;4)-alpha-D-glucosyl](n+2) + phosphate. It participates in glycan biosynthesis; glycogen biosynthesis. The transfer reaction from maltose-1-P to glycogen is inhibited by micromolar amounts of inorganic phosphate or arsenate but is only slightly inhibited by millimolar concentrations of glucose-1-P, glucose-6-P, or inorganic pyrophosphate. Is also inhibited by ATP, by 1,4-dideoxy-1,4-imino-D-arabinitol (DIA), but not by isofagomine. Its function is as follows. Maltosyltransferase that uses maltose 1-phosphate (M1P) as the sugar donor to elongate linear or branched alpha-(1-&gt;4)-glucans. Is also able to catalyze the reverse reaction in vitro. Cannot use glucose 1-phosphate as substrate. Is involved in a branched alpha-glucan biosynthetic pathway from trehalose, together with TreS, Mak and GlgB. This Mycolicibacterium smegmatis (strain ATCC 700084 / mc(2)155) (Mycobacterium smegmatis) protein is Alpha-1,4-glucan:maltose-1-phosphate maltosyltransferase (glgE).